The following is a 309-amino-acid chain: Homoserine kinase (309 aa).

91–101 (PIGSGLGSSAC) provides a ligand contact to ATP.

This sequence belongs to the GHMP kinase family. Homoserine kinase subfamily.

The protein localises to the cytoplasm. The enzyme catalyses L-homoserine + ATP = O-phospho-L-homoserine + ADP + H(+). It functions in the pathway amino-acid biosynthesis; L-threonine biosynthesis; L-threonine from L-aspartate: step 4/5. Its function is as follows. Catalyzes the ATP-dependent phosphorylation of L-homoserine to L-homoserine phosphate. The polypeptide is Homoserine kinase (Escherichia fergusonii (strain ATCC 35469 / DSM 13698 / CCUG 18766 / IAM 14443 / JCM 21226 / LMG 7866 / NBRC 102419 / NCTC 12128 / CDC 0568-73)).